The sequence spans 225 residues: UPF0758 protein AZOSEA04420 (225 aa).

The 124-residue stretch at 102–225 (VFESPLAVRN…PLSFAERGLL (124 aa)) folds into the MPN domain. Positions 173, 175, and 186 each coordinate Zn(2+). The JAMM motif signature appears at 173–186 (HNHPSGAAEPSPAD).

The protein belongs to the UPF0758 family.

The sequence is that of UPF0758 protein AZOSEA04420 from Aromatoleum aromaticum (strain DSM 19018 / LMG 30748 / EbN1) (Azoarcus sp. (strain EbN1)).